The primary structure comprises 390 residues: 1-deoxy-D-xylulose 5-phosphate reductoisomerase (390 aa).

NADPH is bound by residues threonine 10, glycine 11, serine 12, isoleucine 13, glycine 36, arginine 37, asparagine 38, and asparagine 121. Lysine 122 is a 1-deoxy-D-xylulose 5-phosphate binding site. Residue glutamate 123 participates in NADPH binding. A Mn(2+)-binding site is contributed by aspartate 147. Serine 148, glutamate 149, serine 173, and histidine 196 together coordinate 1-deoxy-D-xylulose 5-phosphate. Glutamate 149 contacts Mn(2+). Glycine 202 lines the NADPH pocket. 1-deoxy-D-xylulose 5-phosphate-binding residues include serine 209, asparagine 214, lysine 215, and glutamate 218. Residue glutamate 218 coordinates Mn(2+). A disordered region spans residues 367–390 (AASEHGRREAEKRVGARAHAPAGR). The span at 370-380 (EHGRREAEKRV) shows a compositional bias: basic and acidic residues.

Belongs to the DXR family. Mg(2+) serves as cofactor. The cofactor is Mn(2+).

The enzyme catalyses 2-C-methyl-D-erythritol 4-phosphate + NADP(+) = 1-deoxy-D-xylulose 5-phosphate + NADPH + H(+). It participates in isoprenoid biosynthesis; isopentenyl diphosphate biosynthesis via DXP pathway; isopentenyl diphosphate from 1-deoxy-D-xylulose 5-phosphate: step 1/6. Catalyzes the NADPH-dependent rearrangement and reduction of 1-deoxy-D-xylulose-5-phosphate (DXP) to 2-C-methyl-D-erythritol 4-phosphate (MEP). This chain is 1-deoxy-D-xylulose 5-phosphate reductoisomerase, found in Anaeromyxobacter sp. (strain K).